Here is a 942-residue protein sequence, read N- to C-terminus: tRNAse Z TRZ4, mitochondrial (942 aa).

A mitochondrion-targeting transit peptide spans 1–50 (MLTSSMPQNLSLFGFSPLKSSSFALILRPFSLYPPIFASSSPAPSRRPPR). Positions 38-85 (ASSSPAPSRRPPRTAGYRRSGPSPPRRKWSSFEEQKRKGRSPMEKDKA) are disordered. Over residues 67 to 85 (SSFEEQKRKGRSPMEKDKA) the composition is skewed to basic and acidic residues.

The protein belongs to the RNase Z family. As to quaternary structure, homodimer. It depends on Zn(2+) as a cofactor. The cofactor is Ca(2+). Mn(2+) serves as cofactor. Requires Mg(2+) as cofactor.

It localises to the mitochondrion. It carries out the reaction Endonucleolytic cleavage of RNA, removing extra 3' nucleotides from tRNA precursor, generating 3' termini of tRNAs. A 3'-hydroxy group is left at the tRNA terminus and a 5'-phosphoryl group is left at the trailer molecule.. In terms of biological role, zinc phosphodiesterase, which displays tRNA 3'-processing endonuclease activity. Involved in tRNA maturation, by removing a 3'-trailer from precursor tRNA. Can process the mitochondrial tRNA-like structures (t-elements). The chain is tRNAse Z TRZ4, mitochondrial from Arabidopsis thaliana (Mouse-ear cress).